A 161-amino-acid polypeptide reads, in one-letter code: MKIRGRAIVYGDKIDTDVIIPAKYLVYTDPNILGQHAMEPIDPEFPKKAKGAILVAGRAFGMGSSREQAAIALKGAGVLAVVAESFARIFFRNAINIGLPVLQVPEITKKVKEGEELEVDIENGYCINLATGEKIEGKPIRGLPLAILKAGGLTNYLKSLR.

The protein belongs to the LeuD family. LeuD type 2 subfamily. Heterodimer of LeuC and LeuD.

The catalysed reaction is (2R,3S)-3-isopropylmalate = (2S)-2-isopropylmalate. The protein operates within amino-acid biosynthesis; L-leucine biosynthesis; L-leucine from 3-methyl-2-oxobutanoate: step 2/4. Its function is as follows. Catalyzes the isomerization between 2-isopropylmalate and 3-isopropylmalate, via the formation of 2-isopropylmaleate. This Pyrobaculum islandicum (strain DSM 4184 / JCM 9189 / GEO3) protein is 3-isopropylmalate dehydratase small subunit.